The following is a 303-amino-acid chain: Thyrotroph embryonic factor (303 aa).

Disordered regions lie at residues 1–63 (MSDA…KLEE) and 132–176 (ESAS…DPNC). At Ser-32 the chain carries Phosphoserine. Over residues 41 to 61 (KLMENPPREARLDKEKGKEKL) the composition is skewed to basic and acidic residues. A compositionally biased stretch (low complexity) spans 133–160 (SASSSTASPPSSSTAIFQPSETVSSTES). Residues 233 to 296 (DEKYWTRRKK…GKCKTIVSKY (64 aa)) enclose the bZIP domain. Positions 235–255 (KYWTRRKKNNVAAKRSRDARR) are basic motif. The segment at 256–263 (LKENQITI) is leucine-zipper.

It belongs to the bZIP family. PAR subfamily. In terms of assembly, binds DNA as a homodimer or a heterodimer. Can form a heterodimer with DBP.

Its subcellular location is the nucleus. Its function is as follows. Transcription factor that binds to and transactivates the TSHB promoter. Binds to a minimal DNA-binding sequence 5'-[TC][AG][AG]TTA[TC][AG]-3'. In Homo sapiens (Human), this protein is Thyrotroph embryonic factor (TEF).